A 162-amino-acid chain; its full sequence is Probable chemoreceptor glutamine deamidase CheD (162 aa).

This sequence belongs to the CheD family.

The enzyme catalyses L-glutaminyl-[protein] + H2O = L-glutamyl-[protein] + NH4(+). Its function is as follows. Probably deamidates glutamine residues to glutamate on methyl-accepting chemotaxis receptors (MCPs), playing an important role in chemotaxis. The sequence is that of Probable chemoreceptor glutamine deamidase CheD from Pyrococcus horikoshii (strain ATCC 700860 / DSM 12428 / JCM 9974 / NBRC 100139 / OT-3).